Here is a 409-residue protein sequence, read N- to C-terminus: Broad specificity amino-acid racemase (409 aa).

The N-terminal stretch at 1–24 (MPFRRTLLAASLALLITGQAPLYA) is a signal peptide. A disulfide bond links C71 and C97. Catalysis depends on K75, which acts as the Proton acceptor. An N6-(pyridoxal phosphate)lysine modification is found at K75. R174 provides a ligand contact to substrate. Y301 (proton acceptor) is an active-site residue. A substrate-binding site is contributed by M349.

Belongs to the alanine racemase family. Bsr subfamily. Requires pyridoxal 5'-phosphate as cofactor.

It localises to the periplasm. It catalyses the reaction an L-alpha-amino acid = a D-alpha-amino acid. The catalysed reaction is L-lysine = D-lysine. The enzyme catalyses L-arginine = D-arginine. It carries out the reaction L-glutamine = D-glutamine. Functionally, amino-acid racemase able to utilize a broad range of substrates. Reversibly racemizes 9 of the 19 natural chiral amino acids known, including both positively charged amino acids (Lys, Arg and His) and non-beta-branched aliphatic amino acids (Ala, Leu, Met, Ser, Gln and Asn). Among these amino acids, activity is the highest with lysine and arginine, and poor or very poor with the others. Plays a primary role in the catabolism of basic amino acid, that allows P.putida strain KT2440 to grow on L-Lys and L-Arg as the sole source of carbon and nitrogen, through conversion to their respective D-enantiomers. This Pseudomonas putida (strain ATCC 47054 / DSM 6125 / CFBP 8728 / NCIMB 11950 / KT2440) protein is Broad specificity amino-acid racemase.